The following is a 226-amino-acid chain: ATP synthase F(0) complex subunit a (226 aa).

5 helical membrane passes run L5–I25, W68–L88, Q97–F117, F136–W156, and A189–I209.

The protein belongs to the ATPase A chain family. As to quaternary structure, component of the ATP synthase complex composed at least of ATP5F1A/subunit alpha, ATP5F1B/subunit beta, ATP5MC1/subunit c (homooctomer), MT-ATP6/subunit a, MT-ATP8/subunit 8, ATP5ME/subunit e, ATP5MF/subunit f, ATP5MG/subunit g, ATP5MK/subunit k, ATP5MJ/subunit j, ATP5F1C/subunit gamma, ATP5F1D/subunit delta, ATP5F1E/subunit epsilon, ATP5PF/subunit F6, ATP5PB/subunit b, ATP5PD/subunit d, ATP5PO/subunit OSCP. ATP synthase complex consists of a soluble F(1) head domain (subunits alpha(3) and beta(3)) - the catalytic core - and a membrane F(0) domain - the membrane proton channel (subunits c, a, 8, e, f, g, k and j). These two domains are linked by a central stalk (subunits gamma, delta, and epsilon) rotating inside the F1 region and a stationary peripheral stalk (subunits F6, b, d, and OSCP). Interacts with DNAJC30; interaction is direct.

The protein localises to the mitochondrion inner membrane. The catalysed reaction is H(+)(in) = H(+)(out). Functionally, subunit a, of the mitochondrial membrane ATP synthase complex (F(1)F(0) ATP synthase or Complex V) that produces ATP from ADP in the presence of a proton gradient across the membrane which is generated by electron transport complexes of the respiratory chain. ATP synthase complex consist of a soluble F(1) head domain - the catalytic core - and a membrane F(1) domain - the membrane proton channel. These two domains are linked by a central stalk rotating inside the F(1) region and a stationary peripheral stalk. During catalysis, ATP synthesis in the catalytic domain of F(1) is coupled via a rotary mechanism of the central stalk subunits to proton translocation. With the subunit c (ATP5MC1), forms the proton-conducting channel in the F(0) domain, that contains two crucial half-channels (inlet and outlet) that facilitate proton movement from the mitochondrial intermembrane space (IMS) into the matrix. Protons are taken up via the inlet half-channel and released through the outlet half-channel, following a Grotthuss mechanism. The sequence is that of ATP synthase F(0) complex subunit a from Balaenoptera physalus (Fin whale).